A 199-amino-acid chain; its full sequence is Interleukin-11 (199 aa).

The N-terminal stretch at M1–A21 is a signal peptide. The important for interaction with IL11RA and for the stimulation of cell proliferation stretch occupies residues H182–R190.

The protein belongs to the IL-6 superfamily. As to quaternary structure, interacts with IL11RA to associate with IL6ST, giving rise to a multimeric signaling complex.

It is found in the secreted. Cytokine that stimulates the proliferation of hematopoietic stem cells and megakaryocyte progenitor cells and induces megakaryocyte maturation resulting in increased platelet production. Also promotes the proliferation of hepatocytes in response to liver damage. Binding to its receptor formed by IL6ST and IL11RA activates a signaling cascade that promotes cell proliferation. Signaling leads to the activation of intracellular protein kinases and the phosphorylation of STAT3. The interaction with the membrane-bound IL11RA and IL6ST stimulates 'classic signaling', whereas the binding of IL11 and soluble IL11RA to IL6ST stimulates 'trans-signaling'. The chain is Interleukin-11 from Homo sapiens (Human).